Here is a 203-residue protein sequence, read N- to C-terminus: Small ribosomal subunit protein uS4 (203 aa).

The region spanning Leu-92–Ile-152 is the S4 RNA-binding domain.

Belongs to the universal ribosomal protein uS4 family. Part of the 30S ribosomal subunit. Contacts protein S5. The interaction surface between S4 and S5 is involved in control of translational fidelity.

Its function is as follows. One of the primary rRNA binding proteins, it binds directly to 16S rRNA where it nucleates assembly of the body of the 30S subunit. In terms of biological role, with S5 and S12 plays an important role in translational accuracy. The polypeptide is Small ribosomal subunit protein uS4 (Thermobifida fusca (strain YX)).